Consider the following 436-residue polypeptide: 3-ketoacyl-CoA thiolase (436 aa).

Residue C99 is the Acyl-thioester intermediate of the active site. Active-site proton acceptor residues include H392 and C422.

Belongs to the thiolase-like superfamily. Thiolase family. Heterotetramer of two alpha chains (FadJ) and two beta chains (FadI).

Its subcellular location is the cytoplasm. It carries out the reaction an acyl-CoA + acetyl-CoA = a 3-oxoacyl-CoA + CoA. The protein operates within lipid metabolism; fatty acid beta-oxidation. In terms of biological role, catalyzes the final step of fatty acid oxidation in which acetyl-CoA is released and the CoA ester of a fatty acid two carbons shorter is formed. This Salmonella dublin (strain CT_02021853) protein is 3-ketoacyl-CoA thiolase.